Reading from the N-terminus, the 304-residue chain is Aspartate carbamoyltransferase catalytic subunit (304 aa).

Carbamoyl phosphate contacts are provided by R53 and T54. Residue K82 coordinates L-aspartate. Carbamoyl phosphate contacts are provided by R103, H131, and Q134. L-aspartate contacts are provided by R163 and R224. The carbamoyl phosphate site is built by L263 and P264.

It belongs to the aspartate/ornithine carbamoyltransferase superfamily. ATCase family. In terms of assembly, heterooligomer of catalytic and regulatory chains.

It carries out the reaction carbamoyl phosphate + L-aspartate = N-carbamoyl-L-aspartate + phosphate + H(+). Its pathway is pyrimidine metabolism; UMP biosynthesis via de novo pathway; (S)-dihydroorotate from bicarbonate: step 2/3. Its function is as follows. Catalyzes the condensation of carbamoyl phosphate and aspartate to form carbamoyl aspartate and inorganic phosphate, the committed step in the de novo pyrimidine nucleotide biosynthesis pathway. This is Aspartate carbamoyltransferase catalytic subunit from Haloquadratum walsbyi (strain DSM 16790 / HBSQ001).